The chain runs to 307 residues: MEKNSLFSQRIRLRHLHTFVAVAQQGTLGRAAETLNLSQPALSKTLNELEQLTGARLFERGRQGAQLTLPGEQFLTHAVRVLDAINTAGRSLHRKEGLNNDVVRVGALPTAALGILPSVIGQFHQQQKETTLQVATMSNPMILAGLKTGEIDIGIGRMSDPELMTGLNYELLFLESLKLVVRPNHPLLQENVTLSRVLEWPVVVSPEGTAPRQHSDALVQSQGCKIPSGCIETLSASLSRQLTVEYDYVWFVPSGAVKDDLRHATLVALPVPGHGAGEPIGILTRVDATFSSGCQLMINAIRKSMPF.

The region spanning 11–68 is the HTH lysR-type domain; that stretch reads IRLRHLHTFVAVAQQGTLGRAAETLNLSQPALSKTLNELEQLTGARLFERGRQGAQLT. Residues 28-47 constitute a DNA-binding region (H-T-H motif); it reads LGRAAETLNLSQPALSKTLN.

The protein belongs to the LysR transcriptional regulatory family.

This is an uncharacterized protein from Escherichia coli (strain K12).